The primary structure comprises 718 residues: Mitochondrial potassium channel ATP-binding subunit (718 aa).

A mitochondrion-targeting transit peptide spans Met1 to Phe25. The next 3 membrane-spanning stretches (helical) occupy residues Leu128–Ile148, Thr179–Leu199, and Leu279–Leu299. In terms of domain architecture, ABC transmembrane type-1 spans Val133–Arg420. The region spanning Val455–Arg692 is the ABC transporter domain. Gly490–Thr497 provides a ligand contact to ATP. Residues Ala697–Ser718 are disordered.

The protein belongs to the ABC transporter superfamily. ABCB family. Multidrug resistance exporter (TC 3.A.1.201) subfamily. As to quaternary structure, the mitochondrial potassium channel (mitoK(ATP)) is composed of 4 subunits of CCDC51/MITOK and 4 subunits of ABCB8/MITOSUR. Physically interacts with PAAT. Interacts with Neuropilin-1 (NRP1) in mitochondria.

The protein resides in the mitochondrion inner membrane. Its activity is regulated as follows. Channel activity inhibited by ATP via ABCB8/MITOSUR subunit. Its function is as follows. ATP-binding subunit of the mitochondrial ATP-gated potassium channel (mitoK(ATP)). Together with pore-forming subunit CCDC51/MITOK of the mitoK(ATP) channel, mediates ATP-dependent potassium currents across the mitochondrial inner membrane. An increase in ATP intracellular levels closes the channel, inhibiting K(+) transport, whereas a decrease in ATP levels enhances K(+) uptake in the mitochondrial matrix. Plays a role in mitochondrial iron transport. Required for maintenance of normal cardiac function, possibly by influencing mitochondrial iron export and regulating the maturation of cytosolic iron sulfur cluster-containing enzymes. The chain is Mitochondrial potassium channel ATP-binding subunit (ABCB8) from Pongo abelii (Sumatran orangutan).